The sequence spans 125 residues: Cytochrome c2 (125 aa).

The first 21 residues, 1–21 (MKAIKIAMVGAALVWSASAYA), serve as a signal peptide directing secretion. Positions 23–123 (GDPVKGEQVF…DVIAFLATQH (101 aa)) constitute a Cytochrome c domain. Positions 35, 38, 39, and 101 each coordinate heme c.

This sequence belongs to the cytochrome c family. Binds 1 heme c group covalently per subunit.

Cytochrome c2 is found mainly in purple, non-sulfur, photosynthetic bacteria where it functions as the electron donor to the oxidized bacteriochlorophyll in the photophosphorylation pathway. However, it may also have a role in the respiratory chain and is found in some non-photosynthetic bacteria. The polypeptide is Cytochrome c2 (Rhodomicrobium vannielii (strain ATCC 17100 / DSM 162 / LMG 4299 / NCIMB 10020 / ATH 3.1.1)).